The sequence spans 238 residues: 7-cyano-7-deazaguanine synthase 1 (238 aa).

Residue 14–24 coordinates ATP; the sequence is FSGGQDSATCL. The Zn(2+) site is built by Cys-202, Cys-217, Cys-220, and Cys-223.

The protein belongs to the QueC family. Zn(2+) is required as a cofactor.

The enzyme catalyses 7-carboxy-7-deazaguanine + NH4(+) + ATP = 7-cyano-7-deazaguanine + ADP + phosphate + H2O + H(+). The protein operates within purine metabolism; 7-cyano-7-deazaguanine biosynthesis. Catalyzes the ATP-dependent conversion of 7-carboxy-7-deazaguanine (CDG) to 7-cyano-7-deazaguanine (preQ(0)). The protein is 7-cyano-7-deazaguanine synthase 1 of Rhodopseudomonas palustris (strain HaA2).